Here is a 639-residue protein sequence, read N- to C-terminus: Threonine--tRNA ligase (639 aa).

Residues 1–61 form the TGS domain; that stretch reads MATVRLPDGK…DGGGELEFVT (61 aa). The tract at residues 239–536 is catalytic; sequence DHRRLGRELG…LIEHYAGAFP (298 aa). Zn(2+) is bound by residues C333, H384, and H513.

It belongs to the class-II aminoacyl-tRNA synthetase family. As to quaternary structure, homodimer. Zn(2+) serves as cofactor.

It localises to the cytoplasm. The enzyme catalyses tRNA(Thr) + L-threonine + ATP = L-threonyl-tRNA(Thr) + AMP + diphosphate + H(+). Its function is as follows. Catalyzes the attachment of threonine to tRNA(Thr) in a two-step reaction: L-threonine is first activated by ATP to form Thr-AMP and then transferred to the acceptor end of tRNA(Thr). Also edits incorrectly charged L-seryl-tRNA(Thr). The chain is Threonine--tRNA ligase from Rubrobacter xylanophilus (strain DSM 9941 / JCM 11954 / NBRC 16129 / PRD-1).